Reading from the N-terminus, the 307-residue chain is PCP degradation transcriptional activation protein (307 aa).

The 58-residue stretch at 6–63 (LPLGHLMVFDALYRHGSAGKAAHALSMPQPTLSRWLAQLRTHFDDPLFVRTRSGMEPT) folds into the HTH lysR-type domain. A DNA-binding region (H-T-H motif) is located at residues 23–42 (AGKAAHALSMPQPTLSRWLA).

Belongs to the LysR transcriptional regulatory family.

Its function is as follows. Transcriptional activator for the pcpA, pcpB and pcpE genes for pentachlorophenol (PCP) degradation. Essential for PCP degradation. This is PCP degradation transcriptional activation protein (pcpR) from Sphingobium chlorophenolicum.